The following is a 430-amino-acid chain: Enolase (430 aa).

Gln167 provides a ligand contact to (2R)-2-phosphoglycerate. The active-site Proton donor is Glu209. Mg(2+) contacts are provided by Asp246, Glu287, and Asp314. (2R)-2-phosphoglycerate is bound by residues Lys339, Arg368, Ser369, and Lys390. The Proton acceptor role is filled by Lys339.

This sequence belongs to the enolase family. Mg(2+) serves as cofactor.

The protein resides in the cytoplasm. It is found in the secreted. The protein localises to the cell surface. It catalyses the reaction (2R)-2-phosphoglycerate = phosphoenolpyruvate + H2O. It functions in the pathway carbohydrate degradation; glycolysis; pyruvate from D-glyceraldehyde 3-phosphate: step 4/5. Its function is as follows. Catalyzes the reversible conversion of 2-phosphoglycerate (2-PG) into phosphoenolpyruvate (PEP). It is essential for the degradation of carbohydrates via glycolysis. The chain is Enolase from Prochlorococcus marinus (strain MIT 9312).